Reading from the N-terminus, the 620-residue chain is Chaperone protein HscA homolog (620 aa).

This sequence belongs to the heat shock protein 70 family.

In terms of biological role, chaperone involved in the maturation of iron-sulfur cluster-containing proteins. Has a low intrinsic ATPase activity which is markedly stimulated by HscB. This Pseudomonas entomophila (strain L48) protein is Chaperone protein HscA homolog.